The primary structure comprises 238 residues: CD63 antigen (238 aa).

The Cytoplasmic segment spans residues 1–11 (MAVEGGMKCVK). A helical transmembrane segment spans residues 12-32 (FLLYVLLLAFCACAVGLIAIG). The Extracellular portion of the chain corresponds to 33-51 (VAVQVVLKQAITHETTAGS). Residues 52–72 (LLPVVIIAVGAFLFLVAFVGC) form a helical membrane-spanning segment. Residues 73–81 (CGACKENYC) lie on the Cytoplasmic side of the membrane. The chain crosses the membrane as a helical span at residues 82–102 (LMITFAIFLSLIMLVEVAVAI). Topologically, residues 103 to 203 (AGYVFRDQVK…TIAIWLRKNI (101 aa)) are extracellular. N-linked (GlcNAc...) asparagine glycosylation is found at Asn116, Asn130, Asn150, and Asn172. Residues 204 to 224 (LLVAAAALGIAFVEVLGIIFS) form a helical membrane-spanning segment. Residues 225–238 (CCLVKSIRSGYEVM) are Cytoplasmic-facing. The short motif at 234–238 (GYEVM) is the Lysosomal targeting motif element.

The protein belongs to the tetraspanin (TM4SF) family. As to quaternary structure, interacts with TIMP1 and ITGB1 and recruits TIMP1 to ITGB1. Interacts with CD9. Identified in a complex with CD9 and ITGB3. Interacts with PMEL. Interacts with KDR/VEGFR2; identified in a complex with ITGB1 and KDR/VEGFR2 and is required to recruit KDR to ITGB1 complexes. Interacts with SYT7. In terms of processing, palmitoylated at a low, basal level in unstimulated platelets. The level of palmitoylation increases when platelets are activated by thrombin (in vitro). As to expression, ubiquitous. Strongly expressed in kidney. Detected in spleen, bone marrow, peripheral blood mononuclear cells and macrophages.

The protein localises to the cell membrane. It localises to the lysosome membrane. The protein resides in the late endosome membrane. Its subcellular location is the endosome. It is found in the multivesicular body. The protein localises to the melanosome. It localises to the secreted. The protein resides in the extracellular exosome. Its subcellular location is the cell surface. In terms of biological role, functions as a cell surface receptor for TIMP1 and plays a role in the activation of cellular signaling cascades. Plays a role in the activation of ITGB1 and integrin signaling, leading to the activation of AKT, FAK/PTK2 and MAP kinases. Promotes cell survival, reorganization of the actin cytoskeleton, cell adhesion, spreading and migration, via its role in the activation of AKT and FAK/PTK2. Plays a role in VEGFA signaling via its role in regulating the internalization of KDR/VEGFR2. Plays a role in intracellular vesicular transport processes, and is required for normal trafficking of the PMEL luminal domain that is essential for the development and maturation of melanocytes. Plays a role in the adhesion of leukocytes onto endothelial cells via its role in the regulation of SELP trafficking. May play a role in mast cell degranulation in response to Ms4a2/FceRI stimulation, but not in mast cell degranulation in response to other stimuli. In Mus musculus (Mouse), this protein is CD63 antigen (Cd63).